Here is a 165-residue protein sequence, read N- to C-terminus: Protoporphyrinogen IX oxidase (165 aa).

4 helical membrane passes run 26–46, 77–97, 99–119, and 145–165; these read LHVI…RLFV, AMIA…IVDW, MLWP…HMWL, and PTLL…YWGF. H27 serves as a coordination point for heme. K105 lines the heme pocket.

The protein belongs to the HemJ family. As to quaternary structure, homodimer. Requires heme b as cofactor.

The protein resides in the cell membrane. It carries out the reaction protoporphyrinogen IX + 3 A = protoporphyrin IX + 3 AH2. It functions in the pathway porphyrin-containing compound metabolism; protoporphyrin-IX biosynthesis; protoporphyrin-IX from protoporphyrinogen-IX: step 1/1. Catalyzes the oxidation of protoporphyrinogen IX to protoporphyrin IX. Is involved in the biosynthesis of tetrapyrrole molecules like heme and chlorophyll. Does not use oxygen or artificial electron acceptors such as menadione or benzoquinone. In Cereibacter sphaeroides (strain ATCC 17023 / DSM 158 / JCM 6121 / CCUG 31486 / LMG 2827 / NBRC 12203 / NCIMB 8253 / ATH 2.4.1.) (Rhodobacter sphaeroides), this protein is Protoporphyrinogen IX oxidase.